Reading from the N-terminus, the 493-residue chain is 6-aminohexanoate-cyclic-dimer hydrolase (493 aa).

Active-site charge relay system residues include Lys72 and Ser150. Ser174 serves as the catalytic Acyl-ester intermediate.

This sequence belongs to the amidase family. In terms of assembly, homodimer.

It catalyses the reaction 1,8-diazacyclotetradecane-2,9-dione + H2O = N-(6-aminohexanoyl)-6-aminohexanoate. Its pathway is xenobiotic degradation; nylon-6 oligomer degradation. With respect to regulation, strongly inhibited by 1 uM diisopropylphosphofluoridate and 10 uM p-chloromercuribenzoate but scarcely inhibited by 100 mM EDTA in vitro. Its function is as follows. Specifically catalyzes the hydrolysis of 6-aminohexanoic acid cyclic dimer (1,8-diazacyclotetradecane-2,9-dione) to form the linear dimer 6-aminohexanoyl-6-aminohexanoic acid. Is inactive on 6-aminohexanoic acid oligomers (degree of polymerization 2 to 6), various other cyclic amides, cyclic diamides, linear amides, oligopeptides, and casein. Allows the bacterium to grow on a medium containing 6-aminohexanoic acid cyclic dimer as the sole carbon and nitrogen sources. The chain is 6-aminohexanoate-cyclic-dimer hydrolase (nylA) from Paenarthrobacter ureafaciens.